A 725-amino-acid chain; its full sequence is Catalase-peroxidase (725 aa).

Residues 88–211 (WHSAGTYRIQ…LAASEMGLIY (124 aa)) constitute a cross-link (tryptophyl-tyrosyl-methioninium (Trp-Tyr) (with M-237)). Residue histidine 89 is the Proton acceptor of the active site. Residues 211 to 237 (YVNPEGPGREPDPLKAAQQIRETFKRM) constitute a cross-link (tryptophyl-tyrosyl-methioninium (Tyr-Met) (with W-88)). Histidine 252 contributes to the heme b binding site.

This sequence belongs to the peroxidase family. Peroxidase/catalase subfamily. As to quaternary structure, homodimer or homotetramer. Heme b is required as a cofactor. In terms of processing, formation of the three residue Trp-Tyr-Met cross-link is important for the catalase, but not the peroxidase activity of the enzyme.

It catalyses the reaction H2O2 + AH2 = A + 2 H2O. The catalysed reaction is 2 H2O2 = O2 + 2 H2O. In terms of biological role, bifunctional enzyme with both catalase and broad-spectrum peroxidase activity. This Symbiobacterium thermophilum (strain DSM 24528 / JCM 14929 / IAM 14863 / T) protein is Catalase-peroxidase.